Here is a 441-residue protein sequence, read N- to C-terminus: Ribosomal protein uS12 methylthiotransferase RimO (441 aa).

The region spanning 8–118 (PKIGFVSLGC…VLQHVHHYVP (111 aa)) is the MTTase N-terminal domain. [4Fe-4S] cluster-binding residues include C17, C53, C82, C150, C154, and C157. A Radical SAM core domain is found at 136 to 373 (LTPRHYAYLK…MQLQQQISAE (238 aa)). The TRAM domain occupies 376 to 441 (QEKVGREILV…DEYDLWGSRV (66 aa)).

The protein belongs to the methylthiotransferase family. RimO subfamily. The cofactor is [4Fe-4S] cluster.

The protein resides in the cytoplasm. The enzyme catalyses L-aspartate(89)-[ribosomal protein uS12]-hydrogen + (sulfur carrier)-SH + AH2 + 2 S-adenosyl-L-methionine = 3-methylsulfanyl-L-aspartate(89)-[ribosomal protein uS12]-hydrogen + (sulfur carrier)-H + 5'-deoxyadenosine + L-methionine + A + S-adenosyl-L-homocysteine + 2 H(+). Its function is as follows. Catalyzes the methylthiolation of an aspartic acid residue of ribosomal protein uS12. The polypeptide is Ribosomal protein uS12 methylthiotransferase RimO (Salmonella typhi).